The sequence spans 134 residues: Large ribosomal subunit protein uL16c (134 aa).

The protein belongs to the universal ribosomal protein uL16 family. In terms of assembly, part of the 50S ribosomal subunit.

The protein resides in the plastid. Its subcellular location is the chloroplast. This chain is Large ribosomal subunit protein uL16c, found in Nephroselmis olivacea (Green alga).